The primary structure comprises 91 residues: UPF0335 protein BBta_6866 (91 aa).

Belongs to the UPF0335 family.

The sequence is that of UPF0335 protein BBta_6866 from Bradyrhizobium sp. (strain BTAi1 / ATCC BAA-1182).